We begin with the raw amino-acid sequence, 685 residues long: Phenoloxidase subunit 1 (685 aa).

H209, H213, and H239 together coordinate Cu cation. E351 (proton acceptor) is an active-site residue. Cu cation contacts are provided by H366, H370, and H406. 2 disulfide bridges follow: C580/C622 and C582/C629.

Heterodimer. Forms a complex with an interleukin 1-like protein as a consequence of a host defense response. Cu(2+) is required as a cofactor. In terms of processing, the N-terminus is blocked. As to expression, synthesized by oenocytoids, a type of hemocyte, and released into the hemolymph plasma.

The protein localises to the secreted. It carries out the reaction 2 L-dopa + O2 = 2 L-dopaquinone + 2 H2O. The enzyme catalyses L-tyrosine + O2 = L-dopaquinone + H2O. Its activity is regulated as follows. Activated by immulectin and lipopolysaccharide. Its function is as follows. This is a copper-containing oxidase that functions in the formation of pigments such as melanins and other polyphenolic compounds. Catalyzes the rate-limiting conversions of tyrosine to DOPA, DOPA to DOPA-quinone and possibly 5,6 dihydroxyindole to indole-5'6 quinone. Binds to the surface of hemocytes and is involved in hemocyte melanization. This Manduca sexta (Tobacco hawkmoth) protein is Phenoloxidase subunit 1.